A 261-amino-acid chain; its full sequence is Probable membrane transporter protein ORF9 (261 aa).

8 consecutive transmembrane segments (helical) span residues 8-28 (LLAFLFVAAFIAGFIDSIAGG), 29-49 (GGMITIPAMLIAGIPPLQTLG), 78-98 (LPMALMSAAGAVLGALLATIV), 100-120 (GDVLKAILPFLLIAIALYFGL), 133-151 (VTPFVFTLTLVPLIGFYDG), 152-171 (VFGPGTGSFFMLGFVTLAGF), 189-209 (VGAFGVFLFFGAVLWKVGLLM), and 231-251 (IIKPLLVIVSIALAIRLLADP).

The protein belongs to the 4-toluene sulfonate uptake permease (TSUP) (TC 2.A.102) family.

It localises to the cell membrane. The protein is Probable membrane transporter protein ORF9 of Sinorhizobium sp.